A 201-amino-acid polypeptide reads, in one-letter code: ATP-dependent Clp protease proteolytic subunit (201 aa).

Serine 98 functions as the Nucleophile in the catalytic mechanism. Histidine 123 is a catalytic residue.

It belongs to the peptidase S14 family. In terms of assembly, fourteen ClpP subunits assemble into 2 heptameric rings which stack back to back to give a disk-like structure with a central cavity, resembling the structure of eukaryotic proteasomes.

It is found in the cytoplasm. The catalysed reaction is Hydrolysis of proteins to small peptides in the presence of ATP and magnesium. alpha-casein is the usual test substrate. In the absence of ATP, only oligopeptides shorter than five residues are hydrolyzed (such as succinyl-Leu-Tyr-|-NHMec, and Leu-Tyr-Leu-|-Tyr-Trp, in which cleavage of the -Tyr-|-Leu- and -Tyr-|-Trp bonds also occurs).. Functionally, cleaves peptides in various proteins in a process that requires ATP hydrolysis. Has a chymotrypsin-like activity. Plays a major role in the degradation of misfolded proteins. This chain is ATP-dependent Clp protease proteolytic subunit, found in Rickettsia canadensis (strain McKiel).